The primary structure comprises 384 residues: Gibberellin 3-beta-dioxygenase 1 (384 aa).

The Fe2OG dioxygenase domain occupies 225–327 (TLTSTIHLNM…RISMPYFLGP (103 aa)). Residues H250, D252, and H308 each contribute to the Fe cation site. Residues R318 and S320 each contribute to the 2-oxoglutarate site.

This sequence belongs to the iron/ascorbate-dependent oxidoreductase family. The cofactor is L-ascorbate. Fe(2+) is required as a cofactor. In terms of tissue distribution, expressed in unopened flowers.

It catalyses the reaction gibberellin A20 + 2-oxoglutarate + O2 = gibberellin A1 + succinate + CO2. Its pathway is plant hormone biosynthesis; gibberellin biosynthesis. Functionally, catalyzes the 3-beta-hydroxylation of the inactive gibberellin precursors, leading to the formation of bioactive gibberellins. In vitro, converts the precursors GA20, GA5, GA44 and GA9 to the corresponding 3-beta-hydroxylated bioactive products GA1, GA3, GA38 and GA4, respectively. Involved in the production of bioactive GA for vegetative growth and development. May possess 2,3-desaturase activity, catalyzing the conversion of GA9 to 2,3-dehydro-GA9, and GA20 to GA5 (2,3-dehydro GA20). May possess 2-beta-hydroxylase activity, catalyzing the conversion of GA1 and GA4 to the corresponding 2-beta-hydroxylated products GA8 and GA34, respectively. This is Gibberellin 3-beta-dioxygenase 1 from Oryza sativa subsp. japonica (Rice).